Here is a 267-residue protein sequence, read N- to C-terminus: Glucosamine-6-phosphate deaminase (267 aa).

Asp71 functions as the Proton acceptor; for enolization step in the catalytic mechanism. Catalysis depends on Asp140, which acts as the For ring-opening step. His142 (proton acceptor; for ring-opening step) is an active-site residue. The For ring-opening step role is filled by Glu147.

The protein belongs to the glucosamine/galactosamine-6-phosphate isomerase family. In terms of assembly, homohexamer.

Its subcellular location is the cytoplasm. It carries out the reaction alpha-D-glucosamine 6-phosphate + H2O = beta-D-fructose 6-phosphate + NH4(+). It functions in the pathway nucleotide-sugar biosynthesis; UDP-N-acetyl-alpha-D-glucosamine biosynthesis; alpha-D-glucosamine 6-phosphate from D-fructose 6-phosphate: step 1/1. In terms of biological role, catalyzes the reversible conversion of alpha-D-glucosamine 6-phosphate (GlcN-6P) into beta-D-fructose 6-phosphate (Fru-6P) and ammonium ion, a regulatory reaction step in de novo uridine diphosphate-N-acetyl-alpha-D-glucosamine (UDP-GlcNAc) biosynthesis via hexosamine pathway. The polypeptide is Glucosamine-6-phosphate deaminase (Caenorhabditis elegans).